Reading from the N-terminus, the 4836-residue chain is E3 ubiquitin-protein ligase HERC2 (4836 aa).

A disordered region spans residues 58 to 90; it reads LPLRKDDGVDAQSGTKKEDLNDKEKKEEEETPA. The span at 72–85 shows a compositional bias: basic and acidic residues; that stretch reads TKKEDLNDKEKKEE. T273 bears the Phosphothreonine mark. An RCC1 1-1 repeat occupies 416-462; the sequence is PTSHKGSLQEVIGWGLIGWKYYANVIGPIQCEGLASLGVMQVACAEK. The stretch at 463-513 is one RCC1 1-2 repeat; that stretch reads RFLILSRNGRVYTQAYNSDMLAPQLVQGLASRNIVKIAAHSDGHHYLALAA. Residues 514–569 form an RCC1 1-3 repeat; it reads TGEVYSWGCGDGGRLGHGDTVPLEEPKVISAFSGKQAGKHVVHIACGSTYSAAITA. The RCC1 1-4 repeat unit spans residues 570-621; the sequence is EGELYTWGRGNYGRLGHGSSEDEAIPMLVAGLKGLKVIDVACGSGDAQTLAV. The stretch at 624–675 is one RCC1 1-5 repeat; that stretch reads NGQVWSWGDGDYGKLGRGGSDGCKTPKLIEKLQDLDVIKVRCGSQFSIALTK. Phosphothreonine is present on T648. The RCC1 1-6 repeat unit spans residues 676–727; it reads DGQVYSWGKGDNQRLGHGTEEHVRYPKLLEGLQGKKVIDVAAGSTHCLALTE. The RCC1 1-7 repeat unit spans residues 729 to 779; it reads SEVHSWGSNDQCQHFDTLRVTKPEPTALPGLDSKHIVGIACGPAQSFAWSS. Positions 948–981 form a coiled coil; sequence ALNAAITAEIQDIEAKKEAQKEKEIDEQEASAST. Residues 1208-1284 enclose the Cytochrome b5 heme-binding domain; sequence VTLIRKADLE…MHAFCVGQYL (77 aa). The residue at position 1578 (S1578) is a Phosphoserine. Residues 1860 to 1933 enclose the MIB/HERC2 domain; the sequence is SGPELAAMMK…KYDLKLVELP (74 aa). S1943 carries the phosphoserine modification. Phosphothreonine is present on T1945. A disordered region spans residues 2351–2376; sequence GTGTLQTDDGAAASPDLGDMSPEGPQ. The residue at position 2455 (S2455) is a Phosphoserine. Positions 2555 to 2631 constitute a CPH domain; the sequence is RADFLSNDDY…RYIHVELIGY (77 aa). The segment at 2704–2756 adopts a ZZ-type zinc-finger fold; the sequence is HPGVTCDGCQTFPINGSRFKCRNCDDFDFCETCFKTKKHNTRHTFGRINEPGQ. The Zn(2+) site is built by C2709, C2712, C2724, C2727, C2733, C2736, H2742, and H2746. In terms of domain architecture, DOC spans 2760–2937; the sequence is FCGRSGKQLK…ASDNEEEEDD (178 aa). The segment at 2928–2947 is disordered; that stretch reads ASDNEEEEDDKGSTGSLIRK. Position 2929 is a phosphoserine (S2929). Residues 2959 to 3010 form an RCC1 2-1 repeat; sequence RTKVFVWGLNDKDQLGGLKGSKIKVPSFSETLSALNVVQVAGGSKSLFAVTV. The stretch at 3011–3065 is one RCC1 2-2 repeat; the sequence is EGKVYSCGEATNGRLGLGMSSGTVPIPRQITALSSYVVKKVAVHSGGRHATALTV. The stretch at 3066-3117 is one RCC1 2-3 repeat; sequence DGKVFSWGEGDDGKLGHFSRMNCDKPRLIEALKTKRIRDIACGSSHSAALTS. Residues 3119–3169 form an RCC1 2-4 repeat; that stretch reads GELYTWGLGEYGRLGHGDNTTQLKPKMVKVLLGHRVIQVACGSRDAQTLAL. An RCC1 2-5 repeat occupies 3172–3223; that stretch reads EGLVFSWGDGDFGKLGRGGSEGCNIPQNIERLNGQGVCQIECGAQFSLALTK. The stretch at 3225-3275 is one RCC1 2-6 repeat; sequence GVVWTWGKGDYFRLGHGSDVHVRKPQVVEGLRGKKIVHVAVGALHCLAVTD. An RCC1 2-7 repeat occupies 3276–3327; sequence SGQVYAWGDNDHGQQGNGTTTVNRKPTLVQGLEGQKITRVACGSSHSVAWTT. Disordered regions lie at residues 3479-3499, 3517-3537, and 3604-3632; these read DAVT…RPFI, KTKE…QSLD, and SQSG…SGTV. Low complexity predominate over residues 3480–3495; sequence AVTPSAVTPSAPSASS. Polar residues-rich tracts occupy residues 3604–3613 and 3620–3631; these read SQSGRLSSQP and HPYTDDTSTSGT. Residues 3953–4004 form an RCC1 3-1 repeat; sequence SGTIYGWGHNHRGQLGGIEGAKVKVPTPCEALATLRPVQLIGGEQTLFAVTA. The RCC1 3-2 repeat unit spans residues 4006–4058; the sequence is GKLYATGYGAGGRLGIGGTESVSTPTLLESIQHVFIKKVAVNSGGKHCLALSS. An RCC1 3-3 repeat occupies 4060–4110; the sequence is GEVYSWGEAEDGKLGHGNRSPCDRPRVIESLRGIEVVDVAAGGAHSACVTA. An RCC1 3-4 repeat occupies 4112–4164; sequence GDLYTWGKGRYGRLGHSDSEDQLKPKLVEALQGHRVIDIACGSGDAQTLCLTD. The stretch at 4166–4216 is one RCC1 3-5 repeat; that stretch reads DTVWSWGDGDYGKLGRGGSDGCKVPMKIDSLTGLGVVKVECGSQFSVALTK. Residues 4218-4268 form an RCC1 3-6 repeat; it reads GAVYTWGKGDYHRLGHGSDDHVRRPRQVQGLQGKKVIAIATGSLHCVCCTE. The stretch at 4270–4320 is one RCC1 3-7 repeat; it reads GEVYTWGDNDEGQLGDGTTNAIQRPRLVAALQGKKVNRVACGSAHTLAWST. Residues 4459 to 4796 enclose the HECT domain; sequence DSLLLPHRVW…IHFCKSIDTD (338 aa). Catalysis depends on C4764, which acts as the Glycyl thioester intermediate. A disordered region spans residues 4806–4836; it reads EPAADDSSEDSDNEDADSFASDSTQDYLTGH. Acidic residues predominate over residues 4808-4822; that stretch reads AADDSSEDSDNEDAD. 3 positions are modified to phosphoserine: S4812, S4813, and S4816. Phosphothreonine is present on T4829.

As to quaternary structure, interacts (when phosphorylated at Thr-4829 and sumoylated) with RNF8 (via FHA domain); this interaction increases after ionising radiation (IR) treatment. Interacts with XPA. Interacts with NEURL4. Via its interaction with NEURL4, may indirectly interact with CCP110 and CEP97. Post-translationally, phosphorylation at Thr-4829 is required for interaction with RNF8. In terms of processing, sumoylated with SUMO1 by PIAS4 in response to double-strand breaks (DSBs), promoting the interaction with RNF8. Highest levels are found in brain and testis with lower levels in heart, lung, liver, skeletal muscle and kidney. Little expression detected in spleen.

It localises to the cytoplasm. The protein resides in the cytoskeleton. Its subcellular location is the microtubule organizing center. It is found in the centrosome. The protein localises to the centriole. It localises to the nucleus. The catalysed reaction is S-ubiquitinyl-[E2 ubiquitin-conjugating enzyme]-L-cysteine + [acceptor protein]-L-lysine = [E2 ubiquitin-conjugating enzyme]-L-cysteine + N(6)-ubiquitinyl-[acceptor protein]-L-lysine.. The protein operates within protein modification; protein ubiquitination. In terms of biological role, E3 ubiquitin-protein ligase that regulates ubiquitin-dependent retention of repair proteins on damaged chromosomes. Recruited to sites of DNA damage in response to ionizing radiation (IR) and facilitates the assembly of UBE2N and RNF8 promoting DNA damage-induced formation of 'Lys-63'-linked ubiquitin chains. Acts as a mediator of binding specificity between UBE2N and RNF8. Involved in the maintenance of RNF168 levels. E3 ubiquitin-protein ligase that promotes the ubiquitination and proteasomal degradation of XPA which influences the circadian oscillation of DNA excision repair activity. By controlling the steady-state expression of the IGF1R receptor, indirectly regulates the insulin-like growth factor receptor signaling pathway. Also modulates iron metabolism by regulating the basal turnover of FBXL5. The chain is E3 ubiquitin-protein ligase HERC2 from Mus musculus (Mouse).